The primary structure comprises 449 residues: Tubulin beta chain (449 aa).

GTP is bound by residues Q11, E69, S138, G142, T143, G144, N204, and N226. Mg(2+) is bound at residue E69. The tract at residues 426 to 449 (QDATAEEEGEFDEEEGVMDAEGAA) is disordered. The span at 429–443 (TAEEEGEFDEEEGVM) shows a compositional bias: acidic residues.

Belongs to the tubulin family. In terms of assembly, dimer of alpha and beta chains. A typical microtubule is a hollow water-filled tube with an outer diameter of 25 nm and an inner diameter of 15 nM. Alpha-beta heterodimers associate head-to-tail to form protofilaments running lengthwise along the microtubule wall with the beta-tubulin subunit facing the microtubule plus end conferring a structural polarity. Microtubules usually have 13 protofilaments but different protofilament numbers can be found in some organisms and specialized cells. Mg(2+) serves as cofactor.

The protein resides in the cytoplasm. Its subcellular location is the cytoskeleton. Its function is as follows. Tubulin is the major constituent of microtubules, a cylinder consisting of laterally associated linear protofilaments composed of alpha- and beta-tubulin heterodimers. Microtubules grow by the addition of GTP-tubulin dimers to the microtubule end, where a stabilizing cap forms. Below the cap, tubulin dimers are in GDP-bound state, owing to GTPase activity of alpha-tubulin. The chain is Tubulin beta chain from Eimeria tenella (Coccidian parasite).